The primary structure comprises 118 residues: Ribonuclease P protein component (118 aa).

This sequence belongs to the RnpA family. Consists of a catalytic RNA component (M1 or rnpB) and a protein subunit.

The enzyme catalyses Endonucleolytic cleavage of RNA, removing 5'-extranucleotides from tRNA precursor.. RNaseP catalyzes the removal of the 5'-leader sequence from pre-tRNA to produce the mature 5'-terminus. It can also cleave other RNA substrates such as 4.5S RNA. The protein component plays an auxiliary but essential role in vivo by binding to the 5'-leader sequence and broadening the substrate specificity of the ribozyme. The sequence is that of Ribonuclease P protein component from Rickettsia canadensis (strain McKiel).